A 117-amino-acid chain; its full sequence is Hainantoxin-XV-4 (117 aa).

The signal sequence occupies residues 1–20 (MKLCAVIIASLLVCVAVASS). The disordered stretch occupies residues 20-55 (SSDNQKEFAQEKEMTREETQSLGEHEKDDEVTGSEE). Residues 21–56 (SDNQKEFAQEKEMTREETQSLGEHEKDDEVTGSEER) constitute a propeptide that is removed on maturation. The segment covering 23–55 (NQKEFAQEKEMTREETQSLGEHEKDDEVTGSEE) has biased composition (basic and acidic residues). Cystine bridges form between Cys-58–Cys-72, Cys-65–Cys-78, Cys-69–Cys-115, and Cys-71–Cys-91.

It belongs to the neurotoxin 03 (Tx2) family. 02 subfamily. HNTX-XV sub-subfamily. In terms of tissue distribution, expressed by the venom gland.

The protein resides in the secreted. In terms of biological role, putative ion channel inhibitor. The polypeptide is Hainantoxin-XV-4 (Cyriopagopus hainanus (Chinese bird spider)).